The following is a 281-amino-acid chain: Pseudouridine-5'-phosphate glycosidase (281 aa).

The Proton donor role is filled by Glu9. Substrate-binding residues include Lys69 and Val89. Residue Asp118 participates in Mn(2+) binding. Substrate is bound at residue 120–122 (SAD). Lys139 functions as the Nucleophile in the catalytic mechanism.

This sequence belongs to the pseudouridine-5'-phosphate glycosidase family. As to quaternary structure, homotrimer. Requires Mn(2+) as cofactor.

The enzyme catalyses D-ribose 5-phosphate + uracil = psi-UMP + H2O. Functionally, catalyzes the reversible cleavage of pseudouridine 5'-phosphate (PsiMP) to ribose 5-phosphate and uracil. Functions biologically in the cleavage direction, as part of a pseudouridine degradation pathway. The protein is Pseudouridine-5'-phosphate glycosidase of Thermus thermophilus (strain ATCC BAA-163 / DSM 7039 / HB27).